The following is a 118-amino-acid chain: Late cornified envelope protein 1C (118 aa).

The span at 1-10 (MSCQQSQQQC) shows a compositional bias: low complexity. Disordered stretches follow at residues 1–23 (MSCQ…CPPK) and 87–118 (CHRP…GGCC). The segment covering 11-23 (QPPPKCTPKCPPK) has biased composition (pro residues). Positions 90-103 (PQSSGCCSQPSGGS) are enriched in low complexity. The span at 104-118 (SCCGGGSGQHSGGCC) shows a compositional bias: gly residues.

It belongs to the LCE family. In terms of assembly, interacts with CYSRT1. As to expression, skin-specific. Expression was readily detected in adult trunk skin, adult arm skin, fetal skin, penal skin, vulva, esophagus and tongue. Not expressed in the cervix, rectum, lung, colon, or placenta.

Functionally, precursors of the cornified envelope of the stratum corneum. The polypeptide is Late cornified envelope protein 1C (LCE1C) (Homo sapiens (Human)).